The chain runs to 320 residues: o-succinylbenzoate synthase (320 aa).

The active-site Proton donor is Lys-133. 3 residues coordinate Mg(2+): Asp-161, Glu-190, and Asp-213. Lys-235 functions as the Proton acceptor in the catalytic mechanism.

This sequence belongs to the mandelate racemase/muconate lactonizing enzyme family. MenC type 1 subfamily. A divalent metal cation is required as a cofactor.

The catalysed reaction is (1R,6R)-6-hydroxy-2-succinyl-cyclohexa-2,4-diene-1-carboxylate = 2-succinylbenzoate + H2O. It functions in the pathway quinol/quinone metabolism; 1,4-dihydroxy-2-naphthoate biosynthesis; 1,4-dihydroxy-2-naphthoate from chorismate: step 4/7. Its pathway is quinol/quinone metabolism; menaquinone biosynthesis. In terms of biological role, converts 2-succinyl-6-hydroxy-2,4-cyclohexadiene-1-carboxylate (SHCHC) to 2-succinylbenzoate (OSB). The polypeptide is o-succinylbenzoate synthase (Salmonella paratyphi C (strain RKS4594)).